The primary structure comprises 129 residues: Small ribosomal subunit protein uS11 (129 aa).

The protein belongs to the universal ribosomal protein uS11 family. In terms of assembly, part of the 30S ribosomal subunit. Interacts with proteins S7 and S18. Binds to IF-3.

Functionally, located on the platform of the 30S subunit, it bridges several disparate RNA helices of the 16S rRNA. Forms part of the Shine-Dalgarno cleft in the 70S ribosome. The chain is Small ribosomal subunit protein uS11 from Pseudomonas fluorescens (strain ATCC BAA-477 / NRRL B-23932 / Pf-5).